The primary structure comprises 323 residues: MDIPFEEGVLSPSAADMRPEPPNSLDLNDTHPRRIKLTAPNINLSLDQSEGSILSDDNLDSPDEIDINVDELDTPDEADSFEYAGHEDPTANKDSGQESESIPEYTAEEEREDNRLWRTVVIGEQEQRIDMKVIEPYRRVISHGGYYGDGLNAIIVFAACFLPDSSRADYHYVMENLFLYVISTLELMVAEDYMIVYLNGATPRRRMPGLGWMKKCYQMIDRRLRKNLKSFIIVHPSWFIRTILAATRPFISSKFSSKIKYVNSLSELSGLIPMDCIHIPESIIKLDEELREASEAAKTSCLYNDPEMSSMEKDIDLKLKEKP.

Disordered stretches follow at residues Met-1 to Ile-67 and Asp-79 to Glu-110. Residues Pro-40 to Ser-52 show a composition bias toward polar residues. The span at Asp-57–Ile-67 shows a compositional bias: acidic residues. The 162-residue stretch at Asp-130 to Arg-291 folds into the CRAL-TRIO domain.

It localises to the cytoplasm. In terms of biological role, may play an important role in regulating differentiation, survival and aggressiveness of the tumor cells. This Pongo abelii (Sumatran orangutan) protein is Protein prune homolog 2 (PRUNE2).